Reading from the N-terminus, the 567-residue chain is MNMLNKKIYAEMYGPTVGDSVRLADTDLWVKIEKDFTIYGEEVKFGGGKVIRDGMGQGQMNNKECVDLVLTNAIIIDYWGVIKADIGINNGRIVGIGKSGNPDIQPGVTIYIGPGTEVISAEGKIVTAGGIDVHVHFICPQQIEEALSSGMTTLIGGGTGPTTGSNATTCTPGVWFISRMLQAADALPINIGFTGKGSSALPESLIEQIHAGAIGLKVHEDWGATPATIDCCLNVADNFDVQVSIHTDTLNESGFLETTISAIKNRTIHAYHVEGAGGGHSPDIIRICELNNVLPSSTNPTLPYTINTVDEHLDMMMVCHNLNCNLPEDIAFAESRIRRETIAAEDILHDLGALSMISSDSQAMGRIGETILRTWQTAHKMKLQRGSLLGDDQYNDNTRIKRYIAKYTINPAITHGIAHEVGSVEIGKLADLVLWSPVFFGVKPELIVKGGMIVSSVMGDPNASIPTPQPVYYRLMFGSYDLAKCATRMTFISQSSYDVGVVENLRLNSLIGISKRCRNIKKDHMINNNLKPVMEVDPQTYEVRANGELLVCEPVSVVPMSQRYFLF.

Residues 129–567 (GGIDVHVHFI…VPMSQRYFLF (439 aa)) enclose the Urease domain. Ni(2+)-binding residues include His134, His136, and Lys217. Lys217 is modified (N6-carboxylysine). Substrate is bound at residue His219. Residues His246 and His272 each coordinate Ni(2+). The active-site Proton donor is His320. Ni(2+) is bound at residue Asp360.

The protein belongs to the metallo-dependent hydrolases superfamily. Urease alpha subunit family. Heterotrimer of UreA (gamma), UreB (beta) and UreC (alpha) subunits. Three heterotrimers associate to form the active enzyme. Ni cation is required as a cofactor. Post-translationally, carboxylation allows a single lysine to coordinate two nickel ions.

It is found in the cytoplasm. The catalysed reaction is urea + 2 H2O + H(+) = hydrogencarbonate + 2 NH4(+). Its pathway is nitrogen metabolism; urea degradation; CO(2) and NH(3) from urea (urease route): step 1/1. The chain is Urease subunit alpha from Blochmanniella floridana.